A 386-amino-acid polypeptide reads, in one-letter code: Beta-citrylglutamate synthase B (386 aa).

Residues 119 to 304 (FQELAGHGVP…VAGIIADYAA (186 aa)) form the ATP-grasp domain. ATP-binding positions include Lys158, 193 to 203 (QKYVKESHGRD), and Arg219. Asp264, Glu277, and Asn279 together coordinate Mg(2+). Residues Asp264, Glu277, and Asn279 each coordinate Mn(2+). The tract at residues 325 to 359 (ASETSEPELGPPASTAVDNMSASSSSVDSDPESTE) is disordered. Positions 338-352 (STAVDNMSASSSSVD) are enriched in low complexity.

The protein belongs to the RimK family. Mg(2+) is required as a cofactor. The cofactor is Mn(2+).

Its subcellular location is the cytoplasm. It catalyses the reaction citrate + L-glutamate + ATP = beta-citrylglutamate + ADP + phosphate + H(+). The enzyme catalyses N-acetyl-L-aspartate + L-glutamate + ATP = N-acetyl-L-aspartyl-L-glutamate + ADP + phosphate + H(+). Its function is as follows. Catalyzes the synthesis of beta-citryl-L-glutamate and N-acetyl-L-aspartyl-L-glutamate. Beta-citryl-L-glutamate is synthesized more efficiently than N-acetyl-L-aspartyl-L-glutamate. The chain is Beta-citrylglutamate synthase B (RIMKLB) from Homo sapiens (Human).